The following is a 170-amino-acid chain: Transmembrane protein 217B (170 aa).

The N-terminal stretch at 1–21 is a signal peptide; sequence MNVRMFSLMVGIFSVLNTTQF. Topologically, residues 22-58 are lumenal; that stretch reads FIFDLNQKTHICYEAKFSIYVDSKSELVTWTLFHRAN. A helical transmembrane segment spans residues 59 to 79; that stretch reads ISTGLSLTTIIIGCFLFYCIH. At 80 to 85 the chain is on the cytoplasmic side; the sequence is KNIYMG. The helical transmembrane segment at 86-106 threads the bilayer; it reads LLIYAMWIITYELINFSIVLL. At 107-120 the chain is on the lumenal side; the sequence is LNGIIKDHFKTLSY. Residues 121-141 traverse the membrane as a helical segment; that stretch reads LHWIFQISHMLLHFFCLPFIV. At 142-170 the chain is on the cytoplasmic side; sequence KHAYNLYKESQTVGRKRRHRLCSTIAVNS.

It localises to the membrane. The protein is Transmembrane protein 217B of Homo sapiens (Human).